A 270-amino-acid chain; its full sequence is MASNATDYIKHHLTFWNSDPSAGFWSLHVDTFSISLVLGFLFAAVFAMVARRASIEAPGRLQLFVEMIVELVQTQVREVFHGKSKMIAPLALTIFCWVFLMNFMDLFPVDLFPMAAQWIGYTFFGLEPHHVYFRVVPSADVNATFAMSLSVLILIVGFSIKAKGLGGWGKELLTAPFHSSNPVGAIILAPLNFAFQLVELAAKPISLSLRLFGNLYAGELIFILIALLPWGLQWVLGAPWAIFHILIITLQAFVFMMLTIVYLSLAVEAH.

The next 7 helical transmembrane spans lie at 29–49 (VDTFSISLVLGFLFAAVFAMV), 87–107 (IAPLALTIFCWVFLMNFMDLF), 108–128 (PVDLFPMAAQWIGYTFFGLEP), 140–160 (DVNATFAMSLSVLILIVGFSI), 182–202 (PVGAIILAPLNFAFQLVELAA), 220–240 (LIFILIALLPWGLQWVLGAPW), and 241–261 (AIFHILIITLQAFVFMMLTIV).

It belongs to the ATPase A chain family. As to quaternary structure, F-type ATPases have 2 components, CF(1) - the catalytic core - and CF(0) - the membrane proton channel. CF(1) has five subunits: alpha(3), beta(3), gamma(1), delta(1), epsilon(1). CF(0) has three main subunits: a(1), b(2) and c(9-12). The alpha and beta chains form an alternating ring which encloses part of the gamma chain. CF(1) is attached to CF(0) by a central stalk formed by the gamma and epsilon chains, while a peripheral stalk is formed by the delta and b chains.

It is found in the cell inner membrane. Functionally, key component of the proton channel; it plays a direct role in the translocation of protons across the membrane. This Chromobacterium violaceum (strain ATCC 12472 / DSM 30191 / JCM 1249 / CCUG 213 / NBRC 12614 / NCIMB 9131 / NCTC 9757 / MK) protein is ATP synthase subunit a.